The chain runs to 172 residues: Peptide methionine sulfoxide reductase MsrA (172 aa).

Cys14 is an active-site residue.

The protein belongs to the MsrA Met sulfoxide reductase family.

It carries out the reaction L-methionyl-[protein] + [thioredoxin]-disulfide + H2O = L-methionyl-(S)-S-oxide-[protein] + [thioredoxin]-dithiol. The enzyme catalyses [thioredoxin]-disulfide + L-methionine + H2O = L-methionine (S)-S-oxide + [thioredoxin]-dithiol. Its function is as follows. Has an important function as a repair enzyme for proteins that have been inactivated by oxidation. Catalyzes the reversible oxidation-reduction of methionine sulfoxide in proteins to methionine. In Streptomyces coelicolor (strain ATCC BAA-471 / A3(2) / M145), this protein is Peptide methionine sulfoxide reductase MsrA.